Consider the following 159-residue polypeptide: Transmembrane protein 42 (159 aa).

4 helical membrane passes run 37–57 (FWGV…AASA), 59–79 (LAFG…VMAS), 100–120 (IASV…GYVL), and 124–144 (CQEV…TLIH).

The protein resides in the membrane. The sequence is that of Transmembrane protein 42 (TMEM42) from Homo sapiens (Human).